A 627-amino-acid chain; its full sequence is tRNA uridine 5-carboxymethylaminomethyl modification enzyme MnmG (627 aa).

Residues 16–21 (GAGHAG), V128, and S183 contribute to the FAD site. 275–289 (GPRYCPSIEDKVMRF) contacts NAD(+). Q372 contributes to the FAD binding site.

Belongs to the MnmG family. In terms of assembly, homodimer. Heterotetramer of two MnmE and two MnmG subunits. The cofactor is FAD.

The protein resides in the cytoplasm. NAD-binding protein involved in the addition of a carboxymethylaminomethyl (cmnm) group at the wobble position (U34) of certain tRNAs, forming tRNA-cmnm(5)s(2)U34. The polypeptide is tRNA uridine 5-carboxymethylaminomethyl modification enzyme MnmG (Geobacter sulfurreducens (strain ATCC 51573 / DSM 12127 / PCA)).